Consider the following 101-residue polypeptide: Small ribosomal subunit protein uS14 (101 aa).

It belongs to the universal ribosomal protein uS14 family. In terms of assembly, part of the 30S ribosomal subunit. Contacts proteins S3 and S10.

In terms of biological role, binds 16S rRNA, required for the assembly of 30S particles and may also be responsible for determining the conformation of the 16S rRNA at the A site. This chain is Small ribosomal subunit protein uS14, found in Albidiferax ferrireducens (strain ATCC BAA-621 / DSM 15236 / T118) (Rhodoferax ferrireducens).